Reading from the N-terminus, the 525-residue chain is GMP synthase [glutamine-hydrolyzing] (525 aa).

Residues arginine 9–glutamine 207 form the Glutamine amidotransferase type-1 domain. The active-site Nucleophile is the cysteine 86. Residues histidine 181 and glutamate 183 contribute to the active site. The 193-residue stretch at tryptophan 208–arginine 400 folds into the GMPS ATP-PPase domain. Residue serine 235–serine 241 coordinates ATP.

As to quaternary structure, homodimer.

It catalyses the reaction XMP + L-glutamine + ATP + H2O = GMP + L-glutamate + AMP + diphosphate + 2 H(+). It participates in purine metabolism; GMP biosynthesis; GMP from XMP (L-Gln route): step 1/1. In terms of biological role, catalyzes the synthesis of GMP from XMP. The chain is GMP synthase [glutamine-hydrolyzing] from Idiomarina loihiensis (strain ATCC BAA-735 / DSM 15497 / L2-TR).